The chain runs to 163 residues: Phosphopantetheine adenylyltransferase (163 aa).

Ser11 is a substrate binding site. ATP-binding positions include Ser11–Phe12 and His19. Residues Lys43, Leu75, and Arg89 each contribute to the substrate site. Residues Gly90–Arg92, Glu100, and Phe125–Ser131 each bind ATP.

This sequence belongs to the bacterial CoaD family. As to quaternary structure, homohexamer. Mg(2+) serves as cofactor.

The protein localises to the cytoplasm. It catalyses the reaction (R)-4'-phosphopantetheine + ATP + H(+) = 3'-dephospho-CoA + diphosphate. Its pathway is cofactor biosynthesis; coenzyme A biosynthesis; CoA from (R)-pantothenate: step 4/5. Reversibly transfers an adenylyl group from ATP to 4'-phosphopantetheine, yielding dephospho-CoA (dPCoA) and pyrophosphate. This is Phosphopantetheine adenylyltransferase from Geobacter metallireducens (strain ATCC 53774 / DSM 7210 / GS-15).